An 82-amino-acid chain; its full sequence is MNMDIEARVKKVITSCIAVDVDSINGQTHLVEDLYADSLDLIDIVFGLSEEFDISCNENDLPDMMTFADICRVVKKSLESRV.

Residues 3–78 enclose the Carrier domain; sequence MDIEARVKKV…DICRVVKKSL (76 aa). Position 38 is an O-(pantetheine 4'-phosphoryl)serine (serine 38).

In terms of processing, 4'-phosphopantetheine is transferred from CoA to a specific serine of apo-IacP.

It is found in the cytoplasm. Acyl carrier protein. The polypeptide is Probable acyl carrier protein IacP (iacP) (Salmonella typhimurium (strain SL1344)).